The primary structure comprises 425 residues: Protein CLP1 homolog (425 aa).

ATP is bound by residues Glu-18, Lys-59, and 121 to 126; that span reads DVGKST.

The protein belongs to the Clp1 family. Clp1 subfamily.

The protein resides in the nucleus. Functionally, required for endonucleolytic cleavage during polyadenylation-dependent pre-mRNA 3'-end formation. This Drosophila persimilis (Fruit fly) protein is Protein CLP1 homolog (cbc).